A 1521-amino-acid chain; its full sequence is uncharacterized protein (1521 aa).

Disordered regions lie at residues 1–20 (MENN…NSNN), 85–124 (TFQS…NNNN), 218–254 (ASSP…SSSS), 431–482 (VLNS…TGIT), and 735–797 (NNNN…HQQQ). Composition is skewed to low complexity over residues 94–108 (NTSS…QNNP), 219–254 (SSPS…SSSS), and 431–454 (VLNS…NNTS). Residues 455 to 464 (PAIVTSASIH) show a composition bias toward polar residues. 2 stretches are compositionally biased toward low complexity: residues 465-482 (NSNG…TGIT) and 735-762 (NNNN…NNIL). Residues 763 to 774 (SNTLTSSLINEP) are compositionally biased toward polar residues. The segment covering 775-788 (NQQHQHQQHQQQNQ) has biased composition (low complexity). Residues 853 to 903 (IVNSQQQQQQQQQQQQQQQQQQQQQQQQQQQQQQQQQQQQQQHNNTQNINN) adopt a coiled-coil conformation. A compositionally biased stretch (low complexity) spans 1398–1453 (QQPLPTSKTSSSSSSTSSEATPYLSSSVPPSIVTSTPSTTPMISSSNPNTSSLPTS). A disordered region spans residues 1398-1455 (QQPLPTSKTSSSSSSTSSEATPYLSSSVPPSIVTSTPSTTPMISSSNPNTSSLPTSER).

This is an uncharacterized protein from Dictyostelium discoideum (Social amoeba).